Consider the following 222-residue polypeptide: Transmembrane reductase CYB561D2 (222 aa).

Residues 2–17 (ALSAETESHIYRALRT) lie on the Cytoplasmic side of the membrane. In terms of domain architecture, Cytochrome b561 spans 14–217 (ALRTASGAAA…NQVSNAYLYR (204 aa)). Residues 18–38 (ASGAAAHLVALGFTIFVAVLA) form a helical membrane-spanning segment. Residues 39-46 (RPGSSLFS) lie on the Lumenal side of the membrane. The helical transmembrane segment at 47–67 (WHPVLMSLAFSFLMTEALLVF) threads the bilayer. His-48 lines the heme b pocket. At 68-85 (SPESSLLHSLSRKGRARC) the chain is on the cytoplasmic side. His-86 and His-120 together coordinate heme b. The chain crosses the membrane as a helical span at residues 86–106 (HWVLQLLALLCALLGLGLVIL). The Lumenal segment spans residues 107–122 (HKEQLGKAHLVTRHGQ). The helical transmembrane segment at 123–143 (AGLLAVLWAGLQCSGGVGLLY) threads the bilayer. Residues 144 to 162 (PKLLPRWPLAKLKLYHATS) lie on the Cytoplasmic side of the membrane. Heme b is bound at residue His-159. The helical transmembrane segment at 163–183 (GLVGYLLGSASLLLGMCSLWF) threads the bilayer. The Lumenal portion of the chain corresponds to 184–186 (TAS). A helical membrane pass occupies residues 187–207 (VTGAAWYLAVLCPVLTSLVIM). The Cytoplasmic segment spans residues 208–222 (NQVSNAYLYRKRIQP).

Heme b serves as cofactor.

It localises to the endoplasmic reticulum membrane. The protein resides in the cytoplasmic vesicle membrane. It catalyses the reaction monodehydro-L-ascorbate radical(out) + L-ascorbate(in) = monodehydro-L-ascorbate radical(in) + L-ascorbate(out). The catalysed reaction is Fe(3+)(out) + L-ascorbate(in) = monodehydro-L-ascorbate radical(in) + Fe(2+)(out) + H(+). Its function is as follows. Transmembrane reductase that may use ascorbate as an electron donor in the cytoplasm and transfer electrons across endoplasmic reticulum membranes to reduce monodehydro-L-ascorbate radical and iron cations Fe(3+) in the lumen of that compartment. The sequence is that of Transmembrane reductase CYB561D2 from Homo sapiens (Human).